The chain runs to 121 residues: Keratin-associated protein 1-4 (121 aa).

The protein belongs to the KRTAP type 1 family. As to quaternary structure, interacts with hair keratins. As to expression, expressed in the middle/upper portions of the hair cortex, in the region termed the keratogenous zone.

Functionally, in the hair cortex, hair keratin intermediate filaments are embedded in an interfilamentous matrix, consisting of hair keratin-associated proteins (KRTAP), which are essential for the formation of a rigid and resistant hair shaft through their extensive disulfide bond cross-linking with abundant cysteine residues of hair keratins. The matrix proteins include the high-sulfur and high-glycine-tyrosine keratins. This chain is Keratin-associated protein 1-4 (KRTAP1-4), found in Homo sapiens (Human).